The following is a 693-amino-acid chain: Tegument protein UL47 (693 aa).

Disordered regions lie at residues 1–32 and 48–126; these read MSAR…DGVG and ELEA…GYLG. Over residues 48–57 the composition is skewed to acidic residues; it reads ELEALEEMAG. An RNA-binding region spans residues 50–75; sequence EALEEMAGDEPPVRRRREGPRARRRR. Positions 63-75 match the Nuclear localization signal motif; it reads RRRREGPRARRRR. The span at 63–75 shows a compositional bias: basic residues; it reads RRRREGPRARRRR. The Nuclear export signal signature appears at 647–670; it reads SVLGPRVRVVDIMSQFRKLLMGDE.

It belongs to the alphaherpesvirinae HHV-1 UL47 family. In terms of assembly, interacts with US3 kinase. Interacts with UL31 and UL34; these interactions seem important for efficient virion nuclear egress. Interacts with UL41/VHS. In terms of processing, phosphorylated by US3. This phosphorylation is required for proper nuclear localization.

It is found in the virion tegument. The protein localises to the host nucleus. It localises to the host cytoplasm. Tegument protein that can bind to various RNA transcripts. Plays a role in the attenuation of selective viral and cellular mRNA degradation by modulating the activity of host shutoff RNase UL41/VHS. Also plays a role in the primary envelopment of virions in the perinuclear space, probably by interacting with two nuclear egress proteins UL31 and UL34. The chain is Tegument protein UL47 from Homo sapiens (Human).